We begin with the raw amino-acid sequence, 255 residues long: MSMLIFNIRVARHKALLSRIVSTNMFNPMFRSLRPIQKSFSEISILRVFNKPPIKKFHNSNILKDITSKRNATPAKIAWQAMTTREPFLVYQAKADKKISLIYLLTVGMLINVCVITSFASVDIYRAKDEIFANWVDMDYYEKLSYIGSAFITPALYFTLTLILFLPRRNIYSISTLPSQRFEIVTGFLSPFNKLYFSKSLIVPRKDVSIVTYSLQKNPITLKIRDRPFYYLLNANGKYAGNSKDVLFCVIGNRY.

Helical transmembrane passes span 99-119 (ISLIYLLTVGMLINVCVITSF) and 146-166 (YIGSAFITPALYFTLTLILFL).

The protein resides in the mitochondrion membrane. This is an uncharacterized protein from Schizosaccharomyces pombe (strain 972 / ATCC 24843) (Fission yeast).